The following is a 105-amino-acid chain: Ketoisovalerate oxidoreductase subunit VorD (105 aa).

4Fe-4S ferredoxin-type domains are found at residues 44-73 (FMPVIDESKCVKCYICWKFCPEPAIYIKED) and 74-103 (GFVAIDYDYCKGCGICANECPTKAITMVRE). Residues C53, C56, C59, C63, C83, C86, C89, and C93 each coordinate [4Fe-4S] cluster.

Heterotetramer of one alpha, one beta, one delta and one gamma chain. [4Fe-4S] cluster is required as a cofactor.

It catalyses the reaction 3-methyl-2-oxobutanoate + 2 oxidized [2Fe-2S]-[ferredoxin] + CoA = 2-methylpropanoyl-CoA + 2 reduced [2Fe-2S]-[ferredoxin] + CO2 + H(+). The polypeptide is Ketoisovalerate oxidoreductase subunit VorD (vorD) (Pyrococcus abyssi (strain GE5 / Orsay)).